The sequence spans 186 residues: Large ribosomal subunit protein uL6 (186 aa).

Belongs to the universal ribosomal protein uL6 family. Part of the 50S ribosomal subunit.

In terms of biological role, this protein binds to the 23S rRNA, and is important in its secondary structure. It is located near the subunit interface in the base of the L7/L12 stalk, and near the tRNA binding site of the peptidyltransferase center. The protein is Large ribosomal subunit protein uL6 of Hyperthermus butylicus (strain DSM 5456 / JCM 9403 / PLM1-5).